A 284-amino-acid chain; its full sequence is Bifunctional protein FolD (284 aa).

NADP(+) is bound by residues 166 to 168 (GAS) and Ile232.

The protein belongs to the tetrahydrofolate dehydrogenase/cyclohydrolase family. Homodimer.

It carries out the reaction (6R)-5,10-methylene-5,6,7,8-tetrahydrofolate + NADP(+) = (6R)-5,10-methenyltetrahydrofolate + NADPH. It catalyses the reaction (6R)-5,10-methenyltetrahydrofolate + H2O = (6R)-10-formyltetrahydrofolate + H(+). It functions in the pathway one-carbon metabolism; tetrahydrofolate interconversion. Functionally, catalyzes the oxidation of 5,10-methylenetetrahydrofolate to 5,10-methenyltetrahydrofolate and then the hydrolysis of 5,10-methenyltetrahydrofolate to 10-formyltetrahydrofolate. This Pseudomonas putida (strain W619) protein is Bifunctional protein FolD.